The chain runs to 493 residues: Probable cytosol aminopeptidase (493 aa).

Positions 257 and 262 each coordinate Mn(2+). The active site involves lysine 269. Residues aspartate 281, aspartate 341, and glutamate 343 each contribute to the Mn(2+) site. The active site involves arginine 345.

Belongs to the peptidase M17 family. Requires Mn(2+) as cofactor.

It is found in the cytoplasm. The enzyme catalyses Release of an N-terminal amino acid, Xaa-|-Yaa-, in which Xaa is preferably Leu, but may be other amino acids including Pro although not Arg or Lys, and Yaa may be Pro. Amino acid amides and methyl esters are also readily hydrolyzed, but rates on arylamides are exceedingly low.. The catalysed reaction is Release of an N-terminal amino acid, preferentially leucine, but not glutamic or aspartic acids.. In terms of biological role, presumably involved in the processing and regular turnover of intracellular proteins. Catalyzes the removal of unsubstituted N-terminal amino acids from various peptides. This Synechococcus sp. (strain WH7803) protein is Probable cytosol aminopeptidase.